We begin with the raw amino-acid sequence, 91 residues long: Mercuric transport protein periplasmic component (91 aa).

An N-terminal signal peptide occupies residues M1–A19. Residues Q22–S88 enclose the HMA domain. Positions 33 and 36 each coordinate Hg(2+).

The protein belongs to the MerP family. As to quaternary structure, monomer.

Its subcellular location is the periplasm. Its function is as follows. Involved in mercury resistance. Acts as a mercury scavenger that specifically binds to a mercuric ion in the periplasm and probably passes it to the cytoplasmic mercuric reductase MerA via the mercuric transport protein MerT. In Acinetobacter calcoaceticus, this protein is Mercuric transport protein periplasmic component.